A 291-amino-acid polypeptide reads, in one-letter code: Small ribosomal subunit biogenesis GTPase RsgA (291 aa).

The region spanning 63-221 is the CP-type G domain; the sequence is KNELKRPPVS…IADTPGFSAL (159 aa). Residues 112–115 and 164–172 contribute to the GTP site; these read TKKD and GQSGVGKST. Zn(2+)-binding residues include Cys-245, Cys-250, His-252, and Cys-258.

The protein belongs to the TRAFAC class YlqF/YawG GTPase family. RsgA subfamily. In terms of assembly, monomer. Associates with 30S ribosomal subunit, binds 16S rRNA. Zn(2+) serves as cofactor.

Its subcellular location is the cytoplasm. Its function is as follows. One of several proteins that assist in the late maturation steps of the functional core of the 30S ribosomal subunit. Helps release RbfA from mature subunits. May play a role in the assembly of ribosomal proteins into the subunit. Circularly permuted GTPase that catalyzes slow GTP hydrolysis, GTPase activity is stimulated by the 30S ribosomal subunit. This chain is Small ribosomal subunit biogenesis GTPase RsgA, found in Staphylococcus aureus (strain MRSA252).